Here is a 443-residue protein sequence, read N- to C-terminus: Phosphoglucosamine mutase (443 aa).

The active-site Phosphoserine intermediate is serine 102. Mg(2+)-binding residues include serine 102, aspartate 241, aspartate 243, and aspartate 245. Position 102 is a phosphoserine (serine 102).

Belongs to the phosphohexose mutase family. Requires Mg(2+) as cofactor. Activated by phosphorylation.

The enzyme catalyses alpha-D-glucosamine 1-phosphate = D-glucosamine 6-phosphate. In terms of biological role, catalyzes the conversion of glucosamine-6-phosphate to glucosamine-1-phosphate. This is Phosphoglucosamine mutase from Polaromonas naphthalenivorans (strain CJ2).